The following is a 448-amino-acid chain: Ribosomal protein uS12 methylthiotransferase RimO (448 aa).

The region spanning 16–126 (PRISFVSLGC…VVAAVHEAVP (111 aa)) is the MTTase N-terminal domain. [4Fe-4S] cluster contacts are provided by cysteine 25, cysteine 61, cysteine 90, cysteine 157, cysteine 161, and cysteine 164. Residues 143-380 (LTPRHYAYLK…MEAQSHVSLR (238 aa)) enclose the Radical SAM core domain. One can recognise a TRAM domain in the interval 383-448 (RAKVGKRLSV…DAYDLHGIAV (66 aa)).

It belongs to the methylthiotransferase family. RimO subfamily. Requires [4Fe-4S] cluster as cofactor.

It is found in the cytoplasm. It carries out the reaction L-aspartate(89)-[ribosomal protein uS12]-hydrogen + (sulfur carrier)-SH + AH2 + 2 S-adenosyl-L-methionine = 3-methylsulfanyl-L-aspartate(89)-[ribosomal protein uS12]-hydrogen + (sulfur carrier)-H + 5'-deoxyadenosine + L-methionine + A + S-adenosyl-L-homocysteine + 2 H(+). Its function is as follows. Catalyzes the methylthiolation of an aspartic acid residue of ribosomal protein uS12. In Methylorubrum extorquens (strain PA1) (Methylobacterium extorquens), this protein is Ribosomal protein uS12 methylthiotransferase RimO.